Here is a 310-residue protein sequence, read N- to C-terminus: Aspartate carbamoyltransferase catalytic subunit (310 aa).

Carbamoyl phosphate-binding residues include arginine 55 and threonine 56. Lysine 85 is a binding site for L-aspartate. Carbamoyl phosphate-binding residues include arginine 106, histidine 135, and glutamine 138. Residues arginine 168 and arginine 230 each contribute to the L-aspartate site. Residues leucine 268 and proline 269 each coordinate carbamoyl phosphate.

Belongs to the aspartate/ornithine carbamoyltransferase superfamily. ATCase family. Heterododecamer (2C3:3R2) of six catalytic PyrB chains organized as two trimers (C3), and six regulatory PyrI chains organized as three dimers (R2).

The catalysed reaction is carbamoyl phosphate + L-aspartate = N-carbamoyl-L-aspartate + phosphate + H(+). The protein operates within pyrimidine metabolism; UMP biosynthesis via de novo pathway; (S)-dihydroorotate from bicarbonate: step 2/3. Its function is as follows. Catalyzes the condensation of carbamoyl phosphate and aspartate to form carbamoyl aspartate and inorganic phosphate, the committed step in the de novo pyrimidine nucleotide biosynthesis pathway. The protein is Aspartate carbamoyltransferase catalytic subunit of Buchnera aphidicola subsp. Acyrthosiphon pisum (strain APS) (Acyrthosiphon pisum symbiotic bacterium).